The chain runs to 399 residues: S-adenosylmethionine synthase (399 aa).

Residue His16 coordinates ATP. Asp18 is a binding site for Mg(2+). Glu44 is a K(+) binding site. L-methionine is bound by residues Glu57 and Gln100. The tract at residues 100-110 (QSPDIAQGVDT) is flexible loop. ATP-binding positions include 175–177 (DGK), 246–247 (KF), Asp255, 261–262 (RK), Ala278, and Lys282. Position 255 (Asp255) interacts with L-methionine. Lys286 provides a ligand contact to L-methionine. Lys341 is covalently cross-linked (Isoglutamyl lysine isopeptide (Lys-Gln) (interchain with Q-Cter in protein Pup)).

It belongs to the AdoMet synthase family. As to quaternary structure, homotetramer; dimer of dimers. Mg(2+) serves as cofactor. K(+) is required as a cofactor.

It localises to the cytoplasm. It catalyses the reaction L-methionine + ATP + H2O = S-adenosyl-L-methionine + phosphate + diphosphate. The protein operates within amino-acid biosynthesis; S-adenosyl-L-methionine biosynthesis; S-adenosyl-L-methionine from L-methionine: step 1/1. Catalyzes the formation of S-adenosylmethionine (AdoMet) from methionine and ATP. The overall synthetic reaction is composed of two sequential steps, AdoMet formation and the subsequent tripolyphosphate hydrolysis which occurs prior to release of AdoMet from the enzyme. This Mycolicibacterium smegmatis (strain ATCC 700084 / mc(2)155) (Mycobacterium smegmatis) protein is S-adenosylmethionine synthase.